The primary structure comprises 60 residues: Acrosin (60 aa).

A glycan (N-linked (GlcNAc...) asparagine) is linked at Asn3. One can recognise a Peptidase S1 domain in the interval 24–60 (IIGGQDAAHGSWPWMVSLQIFTYHNNRRYHVCGGSLL).

It belongs to the peptidase S1 family. Heavy chain (catalytic) and a light chain linked by two disulfide bonds. Forms a heterodimer with SERPINA5.

It carries out the reaction Preferential cleavage: Arg-|-Xaa, Lys-|-Xaa.. Its activity is regulated as follows. Inhibited by SERPINA5. Functionally, acrosin is the major protease of mammalian spermatozoa. It is a serine protease of trypsin-like cleavage specificity, it is synthesized in a zymogen form, proacrosin and stored in the acrosome. The chain is Acrosin (ACR) from Capra hircus (Goat).